A 421-amino-acid chain; its full sequence is Anthranilate synthase component 1 (421 aa).

Residues S31 and 207 to 209 each bind L-tryptophan; that span reads PYM. 242–243 is a binding site for chorismate; that stretch reads GT. E269 contacts Mg(2+). Residues Y357, R377, 391–393, and G393 each bind chorismate; that span reads GAG. Residue E406 coordinates Mg(2+).

It belongs to the anthranilate synthase component I family. In terms of assembly, heterotetramer consisting of two non-identical subunits: a beta subunit (TrpG) and a large alpha subunit (TrpE). The cofactor is Mg(2+).

The enzyme catalyses chorismate + L-glutamine = anthranilate + pyruvate + L-glutamate + H(+). Its pathway is amino-acid biosynthesis; L-tryptophan biosynthesis; L-tryptophan from chorismate: step 1/5. Cooperatively feedback inhibited by tryptophan. Part of a heterotetrameric complex that catalyzes the two-step biosynthesis of anthranilate, an intermediate in the biosynthesis of L-tryptophan. In the first step, the glutamine-binding beta subunit (TrpG) of anthranilate synthase (AS) provides the glutamine amidotransferase activity which generates ammonia as a substrate that, along with chorismate, is used in the second step, catalyzed by the large alpha subunit of AS (TrpE) to produce anthranilate. In the absence of TrpG, TrpE can synthesize anthranilate directly from chorismate and high concentrations of ammonia. The sequence is that of Anthranilate synthase component 1 (trpE) from Saccharolobus solfataricus (strain ATCC 35092 / DSM 1617 / JCM 11322 / P2) (Sulfolobus solfataricus).